We begin with the raw amino-acid sequence, 276 residues long: Protease HtpX homolog (276 aa).

A helical transmembrane segment spans residues 14 to 34 (IVLFALIGQALGGTGGMLLAF). Histidine 130 is a binding site for Zn(2+). Residue glutamate 131 is part of the active site. Histidine 134 is a Zn(2+) binding site. A run of 2 helical transmembrane segments spans residues 145-165 (VAAT…FFGG) and 171-191 (LVSL…QSAI). Zn(2+) is bound at residue glutamate 196.

This sequence belongs to the peptidase M48B family. Requires Zn(2+) as cofactor.

The protein resides in the cell inner membrane. This is Protease HtpX homolog from Salinibacter ruber (strain DSM 13855 / M31).